We begin with the raw amino-acid sequence, 608 residues long: Myosin light chain kinase 2, skeletal/cardiac muscle (608 aa).

The segment at 1–160 (MATENGAVEL…RGSPAFLHSP (160 aa)) is disordered. Ala-2 bears the N-acetylalanine mark. Composition is skewed to basic and acidic residues over residues 31 to 43 (AAEK…DPEK) and 50 to 63 (TKQD…KKDA). Over residues 82–91 (GSQGPAGEGG) the composition is skewed to gly residues. A compositionally biased stretch (basic and acidic residues) spans 116-127 (ASEKKPEAEKGP). Phosphoserine is present on residues Ser-153, Ser-159, and Ser-161. The segment at 214–235 (QKEAGEKAPGQADQAKVQGDTS) is disordered. Positions 297–552 (MNSKEALGGG…AAQCLAHPWL (256 aa)) constitute a Protein kinase domain. Residues 303 to 311 (LGGGKFGAV) and Lys-326 each bind ATP. The active-site Proton acceptor is the Asp-418. Phosphothreonine is present on Thr-457. A calmodulin-binding region spans residues 586–598 (IAVSAANRFKKIS).

This sequence belongs to the protein kinase superfamily. CAMK Ser/Thr protein kinase family. As to quaternary structure, may interact with centrin.

The protein localises to the cytoplasm. The catalysed reaction is L-seryl-[myosin light chain] + ATP = O-phospho-L-seryl-[myosin light chain] + ADP + H(+). The enzyme catalyses L-threonyl-[myosin light chain] + ATP = O-phospho-L-threonyl-[myosin light chain] + ADP + H(+). Functionally, implicated in the level of global muscle contraction and cardiac function. Phosphorylates a specific serine in the N-terminus of a myosin light chain. The chain is Myosin light chain kinase 2, skeletal/cardiac muscle (MYLK2) from Oryctolagus cuniculus (Rabbit).